The following is a 463-amino-acid chain: MEERLSTTSSYPSHPGRSVEEDHNTLLASSSISSIIRGTRGHLNNFIESVGNWLVPSSSGRDDDAVSLDSCQSVYSPVRHHINSGTGGGILMEPSSIHVPENYYSVTIGEAQMVVLKRYQNLRLIGSGAQGIVCSAFDTVRNEQVAIKKLSRPFQNVTHAKRAYRELKLMSLVNHKNIIGILNCFTPQKKLDEFNDLYIVMELMDANLCQVIQMDLDHERLSYLLYQMLCGIRHLHSAGIIHRDLKPSNIVVRSDCTLKILDFGLARTAIEAFMMTPYVVTRYYRAPEVILGMGYKENVDVWSIGCIFGELIRGRVLFPGGDHIDQWTRIIEQLGTPDRSFLERLQPTVRNYVENRPRYQATPFEVLFSDNMFPMTADSSRLTGAQARDLLSRMLVIDPERRISVDDALRHPYVNVWFDEIEVYAPPPLPYDHNMDVEQNVDSWREHIFRELTDYARTHDIYS.

A compositionally biased stretch (polar residues) spans 1–12 (MEERLSTTSSYP). The segment at 1–23 (MEERLSTTSSYPSHPGRSVEEDH) is disordered. One can recognise a Protein kinase domain in the interval 119 to 412 (YQNLRLIGSG…ISVDDALRHP (294 aa)). ATP-binding positions include 126–131 (GSGAQG) and K148. D244 acts as the Proton acceptor in catalysis. T276 bears the Phosphothreonine mark. The TXY motif lies at 276–278 (TPY). Y278 carries the post-translational modification Phosphotyrosine.

It belongs to the protein kinase superfamily. CMGC Ser/Thr protein kinase family. MAP kinase subfamily. Binds to the scaffolding protein, unc-16. Unc-16 also binds other components of the JNK signaling pathway. Interacts with daf-16. It depends on Mg(2+) as a cofactor. In terms of processing, dually phosphorylated on Thr-276 and Tyr-278, which activates the enzyme. In terms of tissue distribution, expressed in most neurons, including nerve ring, head ganglions, dorsal and ventral nerve cords and tail ganglions. The Thr-276/Tyr-278 phosphorylated form is present in the nerve ring upon heat exposure.

It localises to the cytoplasm. The protein resides in the perikaryon. It is found in the cell projection. Its subcellular location is the axon. It catalyses the reaction L-seryl-[protein] + ATP = O-phospho-L-seryl-[protein] + ADP + H(+). The catalysed reaction is L-threonyl-[protein] + ATP = O-phospho-L-threonyl-[protein] + ADP + H(+). With respect to regulation, activated by threonine and tyrosine phosphorylation by either of the dual specificity kinases, jkk-1 and mek-1. In terms of biological role, serine/threonine-protein kinase which responds to activation by environmental stress by phosphorylating a number of transcription factors such as daf-16, and thus regulates transcriptional activity. By phosphorylating daf-16, plays a role in daf-16 nuclear translocation in intestinal cells in response to environmental stresses such as heat and oxidative stresses. Downstream of jkk-1, may coordinate locomotion via type-D GABAergic motoneurons and regulates synaptic vesicle transport in conjunction with unc-16. Independently of jkk-1, may regulate some mechanosensory responses, such as response to touch. Independently of jkk-1 and downstream of mek-1, plays a role in resistance to heavy metals, such as Cu(2+) or Cd(2+). Regulates germline cell apoptosis in response to heavy metals such as Cu(2+) and arsenite. Required for dopaminergic CEP neuron degeneration in response to Mn(2+). Required for normal sleep bout quantity and arousal thresholds during the transition from the last larval stage to adulthood in well-fed animals. Downstream of jkk-1 but independently of mek-1, positively regulates lifespan. This chain is Stress-activated protein kinase jnk-1 (jnk-1), found in Caenorhabditis elegans.